The chain runs to 243 residues: Probable septum site-determining protein MinC (243 aa).

The protein belongs to the MinC family. As to quaternary structure, interacts with MinD and FtsZ.

Cell division inhibitor that blocks the formation of polar Z ring septums. Rapidly oscillates between the poles of the cell to destabilize FtsZ filaments that have formed before they mature into polar Z rings. Prevents FtsZ polymerization. The protein is Probable septum site-determining protein MinC of Agathobacter rectalis (strain ATCC 33656 / DSM 3377 / JCM 17463 / KCTC 5835 / VPI 0990) (Eubacterium rectale).